We begin with the raw amino-acid sequence, 273 residues long: Ribosomal RNA small subunit methyltransferase I (273 aa).

The protein belongs to the methyltransferase superfamily. RsmI family.

It is found in the cytoplasm. It catalyses the reaction cytidine(1402) in 16S rRNA + S-adenosyl-L-methionine = 2'-O-methylcytidine(1402) in 16S rRNA + S-adenosyl-L-homocysteine + H(+). Functionally, catalyzes the 2'-O-methylation of the ribose of cytidine 1402 (C1402) in 16S rRNA. The sequence is that of Ribosomal RNA small subunit methyltransferase I from Xylella fastidiosa (strain Temecula1 / ATCC 700964).